Consider the following 89-residue polypeptide: NADH-ubiquinone oxidoreductase chain 4L (89 aa).

Helical transmembrane passes span 1–21 (MNFSIFLFLIGILGFVLNRKN), 22–42 (IILMLISIEIMLLAITFLILI), and 55–75 (FAIYIITIAGAESAIGLGILV).

Belongs to the complex I subunit 4L family.

It is found in the mitochondrion membrane. The catalysed reaction is a ubiquinone + NADH + 5 H(+)(in) = a ubiquinol + NAD(+) + 4 H(+)(out). Functionally, core subunit of the mitochondrial membrane respiratory chain NADH dehydrogenase (Complex I) that is believed to belong to the minimal assembly required for catalysis. Complex I functions in the transfer of electrons from NADH to the respiratory chain. The immediate electron acceptor for the enzyme is believed to be ubiquinone. This chain is NADH-ubiquinone oxidoreductase chain 4L (nd4L), found in Talaromyces marneffei (Penicillium marneffei).